The chain runs to 506 residues: MSEIEKRNHGDCNILYKEIKKREQKLVNMKKEGFSFPNSFKKNTTSRKIYQKYQTKNRNELISLNIEVSIAGRMVQRRIMGKASFFTLQDIEGKIQIYINEKKISSDFYRFHFKKWDIGDILGVIGTLFKTKTGELSIYCKNVTILNKSLKPLPDKFHGLSNQEIRYRKRYLDLISNNKLYSIFKNRSNIITAIRNFMIENDFLEVETPMLQNIPGGANARPFITYHNEIDSQMYLRIAPELYLKKLIIGGFERIFELNRNFRNEGVSARHNPEFTMMEAYIAYSNYEDMMELTENLFKSITKFLFQDNKIIFNNNNFDFSQPFRRLTMTDSILEFNSTITSSDLKDFYKIREFAKSIGIKVEKKWGCGQIETEIFEKTVEKKLIQPTFITQYPVEVSPLARRNDINLNITDRFELFIGGYEIGNGFSELNDVEDQKTRFLNQIQKSNKEDNKNLFYDKEYIEALKYGLPPTSGLGIGIDRLIMILTNQISIRDVILFPTLRPFKK.

Positions 415 and 422 each coordinate Mg(2+).

Belongs to the class-II aminoacyl-tRNA synthetase family. Homodimer. Requires Mg(2+) as cofactor.

It is found in the cytoplasm. It carries out the reaction tRNA(Lys) + L-lysine + ATP = L-lysyl-tRNA(Lys) + AMP + diphosphate. The chain is Lysine--tRNA ligase (lysS) from Buchnera aphidicola subsp. Acyrthosiphon pisum (strain APS) (Acyrthosiphon pisum symbiotic bacterium).